The sequence spans 299 residues: Acetylglutamate kinase (299 aa).

Substrate-binding positions include 70 to 71 (GG), arginine 92, and asparagine 186.

The protein belongs to the acetylglutamate kinase family. ArgB subfamily.

The protein resides in the cytoplasm. The catalysed reaction is N-acetyl-L-glutamate + ATP = N-acetyl-L-glutamyl 5-phosphate + ADP. It participates in amino-acid biosynthesis; L-arginine biosynthesis; N(2)-acetyl-L-ornithine from L-glutamate: step 2/4. Catalyzes the ATP-dependent phosphorylation of N-acetyl-L-glutamate. The polypeptide is Acetylglutamate kinase (Thermoanaerobacter sp. (strain X514)).